The primary structure comprises 136 residues: Protein PsiE (136 aa).

Helical transmembrane passes span 15-35 (ILQNVLNLGLLTLGLILVLFL), 55-75 (YELVEGLVIYFLYFEFIALIV), 82-102 (FHFPLRYFVYIGITAIVRLII), and 108-128 (PMDVLLYSAAILLLVITLWLC).

The protein belongs to the PsiE family.

It localises to the cell inner membrane. The protein is Protein PsiE of Salmonella arizonae (strain ATCC BAA-731 / CDC346-86 / RSK2980).